Consider the following 129-residue polypeptide: MQKVFNMHDLVKFSPETLKYNEAGLVPCIAQDVESGEILMMAWMNAESVAKTLETGRVTYWSRSRQSFWIKGESSGHVQELVELRVDCDRDALLAMVRQTGPACHTNRRSCFYTAIRDGEEHEIMTPIS.

Aspartate 87 lines the Mg(2+) pocket. Cysteine 88 provides a ligand contact to Zn(2+). The Mg(2+) site is built by aspartate 89 and aspartate 91. Zn(2+) contacts are provided by cysteine 104 and cysteine 111.

This sequence belongs to the PRA-CH family. In terms of assembly, homodimer. The cofactor is Mg(2+). Zn(2+) serves as cofactor.

Its subcellular location is the cytoplasm. The catalysed reaction is 1-(5-phospho-beta-D-ribosyl)-5'-AMP + H2O = 1-(5-phospho-beta-D-ribosyl)-5-[(5-phospho-beta-D-ribosylamino)methylideneamino]imidazole-4-carboxamide. It functions in the pathway amino-acid biosynthesis; L-histidine biosynthesis; L-histidine from 5-phospho-alpha-D-ribose 1-diphosphate: step 3/9. Its function is as follows. Catalyzes the hydrolysis of the adenine ring of phosphoribosyl-AMP. In Ruegeria sp. (strain TM1040) (Silicibacter sp.), this protein is Phosphoribosyl-AMP cyclohydrolase.